Consider the following 293-residue polypeptide: Ribosomal protein L11 methyltransferase (293 aa).

4 residues coordinate S-adenosyl-L-methionine: Thr145, Gly166, Asp188, and Asn230.

The protein belongs to the methyltransferase superfamily. PrmA family.

It is found in the cytoplasm. It carries out the reaction L-lysyl-[protein] + 3 S-adenosyl-L-methionine = N(6),N(6),N(6)-trimethyl-L-lysyl-[protein] + 3 S-adenosyl-L-homocysteine + 3 H(+). Functionally, methylates ribosomal protein L11. This chain is Ribosomal protein L11 methyltransferase, found in Actinobacillus pleuropneumoniae serotype 7 (strain AP76).